Here is a 488-residue protein sequence, read N- to C-terminus: 3-octaprenyl-4-hydroxybenzoate carboxy-lyase (488 aa).

A Mn(2+)-binding site is contributed by Asn172. Residues 175-177 (IYR), 189-191 (RWL), and 194-195 (RG) each bind prenylated FMN. Glu238 contacts Mn(2+). The active-site Proton donor is Asp287.

This sequence belongs to the UbiD family. In terms of assembly, homohexamer. The cofactor is prenylated FMN. Mn(2+) serves as cofactor.

It is found in the cell membrane. It catalyses the reaction a 4-hydroxy-3-(all-trans-polyprenyl)benzoate + H(+) = a 2-(all-trans-polyprenyl)phenol + CO2. The protein operates within cofactor biosynthesis; ubiquinone biosynthesis. Functionally, catalyzes the decarboxylation of 3-octaprenyl-4-hydroxy benzoate to 2-octaprenylphenol, an intermediate step in ubiquinone biosynthesis. The polypeptide is 3-octaprenyl-4-hydroxybenzoate carboxy-lyase (Hahella chejuensis (strain KCTC 2396)).